Reading from the N-terminus, the 197-residue chain is Phosphoheptose isomerase (197 aa).

In terms of domain architecture, SIS spans 34–196; it reads MVHCLLGGNK…DRTLFPQDEQ (163 aa). 49 to 51 serves as a coordination point for substrate; it reads NGG. Zn(2+)-binding residues include His-58 and Glu-62. Substrate contacts are provided by residues Glu-62, 91-92, 117-119, Ser-122, and Gln-172; these read ND and STS. 2 residues coordinate Zn(2+): Gln-172 and His-180.

Belongs to the SIS family. GmhA subfamily. As to quaternary structure, homotetramer. Zn(2+) serves as cofactor.

It is found in the cytoplasm. The enzyme catalyses 2 D-sedoheptulose 7-phosphate = D-glycero-alpha-D-manno-heptose 7-phosphate + D-glycero-beta-D-manno-heptose 7-phosphate. It functions in the pathway carbohydrate biosynthesis; D-glycero-D-manno-heptose 7-phosphate biosynthesis; D-glycero-alpha-D-manno-heptose 7-phosphate and D-glycero-beta-D-manno-heptose 7-phosphate from sedoheptulose 7-phosphate: step 1/1. Its function is as follows. Catalyzes the isomerization of sedoheptulose 7-phosphate in D-glycero-D-manno-heptose 7-phosphate. This is Phosphoheptose isomerase from Shewanella sp. (strain W3-18-1).